The primary structure comprises 171 residues: Shikimate kinase (171 aa).

14–19 (GAGKST) is a binding site for ATP. S18 contributes to the Mg(2+) binding site. Residues D36, R60, and G82 each contribute to the substrate site. Residue R120 coordinates ATP. R139 contributes to the substrate binding site. Q156 contacts ATP.

The protein belongs to the shikimate kinase family. In terms of assembly, monomer. It depends on Mg(2+) as a cofactor.

It localises to the cytoplasm. It catalyses the reaction shikimate + ATP = 3-phosphoshikimate + ADP + H(+). Its pathway is metabolic intermediate biosynthesis; chorismate biosynthesis; chorismate from D-erythrose 4-phosphate and phosphoenolpyruvate: step 5/7. Its function is as follows. Catalyzes the specific phosphorylation of the 3-hydroxyl group of shikimic acid using ATP as a cosubstrate. This chain is Shikimate kinase, found in Shewanella denitrificans (strain OS217 / ATCC BAA-1090 / DSM 15013).